A 99-amino-acid chain; its full sequence is Aspartyl/glutamyl-tRNA(Asn/Gln) amidotransferase subunit C (99 aa).

It belongs to the GatC family. As to quaternary structure, heterotrimer of A, B and C subunits.

The catalysed reaction is L-glutamyl-tRNA(Gln) + L-glutamine + ATP + H2O = L-glutaminyl-tRNA(Gln) + L-glutamate + ADP + phosphate + H(+). It carries out the reaction L-aspartyl-tRNA(Asn) + L-glutamine + ATP + H2O = L-asparaginyl-tRNA(Asn) + L-glutamate + ADP + phosphate + 2 H(+). Functionally, allows the formation of correctly charged Asn-tRNA(Asn) or Gln-tRNA(Gln) through the transamidation of misacylated Asp-tRNA(Asn) or Glu-tRNA(Gln) in organisms which lack either or both of asparaginyl-tRNA or glutaminyl-tRNA synthetases. The reaction takes place in the presence of glutamine and ATP through an activated phospho-Asp-tRNA(Asn) or phospho-Glu-tRNA(Gln). This chain is Aspartyl/glutamyl-tRNA(Asn/Gln) amidotransferase subunit C, found in Mycobacterium marinum (strain ATCC BAA-535 / M).